The chain runs to 300 residues: UDP-N-acetylenolpyruvoylglucosamine reductase (300 aa).

One can recognise an FAD-binding PCMH-type domain in the interval 28–190 (KIGGRVKYLV…TRAMMSFKKE (163 aa)). Arg169 is a catalytic residue. The Proton donor role is filled by Ser219. Glu290 is an active-site residue.

Belongs to the MurB family. FAD is required as a cofactor.

It localises to the cytoplasm. It catalyses the reaction UDP-N-acetyl-alpha-D-muramate + NADP(+) = UDP-N-acetyl-3-O-(1-carboxyvinyl)-alpha-D-glucosamine + NADPH + H(+). It participates in cell wall biogenesis; peptidoglycan biosynthesis. Its function is as follows. Cell wall formation. In Thermotoga sp. (strain RQ2), this protein is UDP-N-acetylenolpyruvoylglucosamine reductase.